The primary structure comprises 60 residues: Putative per-hexamer repeat protein 1 (60 aa).

This Mus musculus (Mouse) protein is Putative per-hexamer repeat protein 1 (Phxr1).